Here is a 116-residue protein sequence, read N- to C-terminus: Protein Rev (116 aa).

At serine 8 the chain carries Phosphoserine; by host CK2. Residues 18–26 (LIKSLYQSN) are homomultimerization. 2 disordered regions span residues 20-46 (KSLY…RRWR) and 84-116 (DSSE…GAKE). Residues 34 to 50 (TRQARRNRRRRWRERQR) carry the Nuclear localization signal and RNA-binding (RRE) motif. Basic residues predominate over residues 36–46 (QARRNRRRRWR). A Nuclear export signal and binding to XPO1 motif is present at residues 73–84 (LQLPPLERLTLD). Residues 88-98 (DCGTSGTQGVG) are compositionally biased toward polar residues. Phosphoserine; by host is present on residues serine 92 and serine 99.

Belongs to the HIV-1 REV protein family. In terms of assembly, homomultimer; when bound to the RRE. Multimeric assembly is essential for activity and may involve XPO1. Binds to human KPNB1, XPO1, TNPO1, RANBP5 and IPO7. Interacts with the viral Integrase. Interacts with human KHDRBS1. Interacts with human NAP1; this interaction decreases Rev multimerization and stimulates its activity. Interacts with human DEAD-box helicases DDX3 and DDX24; these interactions may serve for viral RNA export to the cytoplasm and packaging, respectively. Interacts with human PSIP1; this interaction may inhibit HIV-1 DNA integration by promoting dissociation of the Integrase-LEDGF/p75 complex. In terms of processing, asymmetrically arginine dimethylated at one site by host PRMT6. Methylation impairs the RNA-binding activity and export of viral RNA from the nucleus to the cytoplasm. Post-translationally, phosphorylated by protein kinase CK2. Presence of, and maybe binding to the N-terminus of the regulatory beta subunit of CK2 is necessary for CK2-mediated Rev's phosphorylation.

It localises to the host nucleus. Its subcellular location is the host nucleolus. It is found in the host cytoplasm. Functionally, escorts unspliced or incompletely spliced viral pre-mRNAs (late transcripts) out of the nucleus of infected cells. These pre-mRNAs carry a recognition sequence called Rev responsive element (RRE) located in the env gene, that is not present in fully spliced viral mRNAs (early transcripts). This function is essential since most viral proteins are translated from unspliced or partially spliced pre-mRNAs which cannot exit the nucleus by the pathway used by fully processed cellular mRNAs. Rev itself is translated from a fully spliced mRNA that readily exits the nucleus. Rev's nuclear localization signal (NLS) binds directly to KPNB1/Importin beta-1 without previous binding to KPNA1/Importin alpha-1. KPNB1 binds to the GDP bound form of RAN (Ran-GDP) and targets Rev to the nucleus. In the nucleus, the conversion from Ran-GDP to Ran-GTP dissociates Rev from KPNB1 and allows Rev's binding to the RRE in viral pre-mRNAs. Rev multimerization on the RRE via cooperative assembly exposes its nuclear export signal (NES) to the surface. Rev can then form a complex with XPO1/CRM1 and Ran-GTP, leading to nuclear export of the complex. Conversion from Ran-GTP to Ran-GDP mediates dissociation of the Rev/RRE/XPO1/RAN complex, so that Rev can return to the nucleus for a subsequent round of export. Beside KPNB1, also seems to interact with TNPO1/Transportin-1, RANBP5/IPO5 and IPO7/RANBP7 for nuclear import. The nucleoporin-like HRB/RIP is an essential cofactor that probably indirectly interacts with Rev to release HIV RNAs from the perinuclear region to the cytoplasm. This chain is Protein Rev, found in Human immunodeficiency virus type 1 group M subtype B (isolate RF/HAT3) (HIV-1).